A 196-amino-acid polypeptide reads, in one-letter code: Small heat shock protein C3 (196 aa).

The 109-residue stretch at 88–196 (SAYSSSAIRT…EKDAKEIPIQ (109 aa)) folds into the sHSP domain.

Belongs to the small heat shock protein (HSP20) family.

This chain is Small heat shock protein C3 (hspc3-1), found in Rickettsia felis (strain ATCC VR-1525 / URRWXCal2) (Rickettsia azadi).